Here is a 923-residue protein sequence, read N- to C-terminus: Leucine--tRNA ligase (923 aa).

Residues 41-52 (PYPSGEGLHVGH) carry the 'HIGH' region motif. The 'KMSKS' region motif lies at 698–702 (KMSKS). An ATP-binding site is contributed by Lys-701.

Belongs to the class-I aminoacyl-tRNA synthetase family.

It is found in the cytoplasm. The catalysed reaction is tRNA(Leu) + L-leucine + ATP = L-leucyl-tRNA(Leu) + AMP + diphosphate. This is Leucine--tRNA ligase from Amoebophilus asiaticus (strain 5a2).